The chain runs to 348 residues: Phosphate acyltransferase (348 aa).

Belongs to the PlsX family. In terms of assembly, homodimer. Probably interacts with PlsY.

It is found in the cytoplasm. It carries out the reaction a fatty acyl-[ACP] + phosphate = an acyl phosphate + holo-[ACP]. Its pathway is lipid metabolism; phospholipid metabolism. In terms of biological role, catalyzes the reversible formation of acyl-phosphate (acyl-PO(4)) from acyl-[acyl-carrier-protein] (acyl-ACP). This enzyme utilizes acyl-ACP as fatty acyl donor, but not acyl-CoA. In Rhizobium etli (strain ATCC 51251 / DSM 11541 / JCM 21823 / NBRC 15573 / CFN 42), this protein is Phosphate acyltransferase.